We begin with the raw amino-acid sequence, 340 residues long: GTP 3',8-cyclase (340 aa).

The Radical SAM core domain maps to 20–246 (RFERQYVYLR…PKALSDGPAK (227 aa)). R29 contacts GTP. 2 residues coordinate [4Fe-4S] cluster: C36 and C40. Y42 contacts S-adenosyl-L-methionine. Residue C43 participates in [4Fe-4S] cluster binding. Residue R79 coordinates GTP. G83 contributes to the S-adenosyl-L-methionine binding site. T110 serves as a coordination point for GTP. S134 contacts S-adenosyl-L-methionine. K171 contributes to the GTP binding site. Residue M205 participates in S-adenosyl-L-methionine binding. Residues C268 and C271 each coordinate [4Fe-4S] cluster. 273–275 (RLR) is a binding site for GTP. C285 lines the [4Fe-4S] cluster pocket.

It belongs to the radical SAM superfamily. MoaA family. Monomer and homodimer. The cofactor is [4Fe-4S] cluster.

It catalyses the reaction GTP + AH2 + S-adenosyl-L-methionine = (8S)-3',8-cyclo-7,8-dihydroguanosine 5'-triphosphate + 5'-deoxyadenosine + L-methionine + A + H(+). Its pathway is cofactor biosynthesis; molybdopterin biosynthesis. Functionally, catalyzes the cyclization of GTP to (8S)-3',8-cyclo-7,8-dihydroguanosine 5'-triphosphate. The polypeptide is GTP 3',8-cyclase (Actinobacillus pleuropneumoniae serotype 3 (strain JL03)).